Here is a 201-residue protein sequence, read N- to C-terminus: Pyrrolidone-carboxylate peptidase (201 aa).

Residues Glu81, Cys143, and His168 contribute to the active site.

This sequence belongs to the peptidase C15 family. In terms of assembly, homotetramer.

The protein resides in the cytoplasm. It catalyses the reaction Release of an N-terminal pyroglutamyl group from a polypeptide, the second amino acid generally not being Pro.. Its function is as follows. Removes 5-oxoproline from various penultimate amino acid residues except L-proline. This is Pyrrolidone-carboxylate peptidase (pcp) from Halalkalibacterium halodurans (strain ATCC BAA-125 / DSM 18197 / FERM 7344 / JCM 9153 / C-125) (Bacillus halodurans).